Here is a 444-residue protein sequence, read N- to C-terminus: Probable glycine dehydrogenase (decarboxylating) subunit 1 (444 aa).

It belongs to the GcvP family. N-terminal subunit subfamily. In terms of assembly, the glycine cleavage system is composed of four proteins: P, T, L and H. In this organism, the P 'protein' is a heterodimer of two subunits.

The catalysed reaction is N(6)-[(R)-lipoyl]-L-lysyl-[glycine-cleavage complex H protein] + glycine + H(+) = N(6)-[(R)-S(8)-aminomethyldihydrolipoyl]-L-lysyl-[glycine-cleavage complex H protein] + CO2. Functionally, the glycine cleavage system catalyzes the degradation of glycine. The P protein binds the alpha-amino group of glycine through its pyridoxal phosphate cofactor; CO(2) is released and the remaining methylamine moiety is then transferred to the lipoamide cofactor of the H protein. This chain is Probable glycine dehydrogenase (decarboxylating) subunit 1, found in Carboxydothermus hydrogenoformans (strain ATCC BAA-161 / DSM 6008 / Z-2901).